A 392-amino-acid polypeptide reads, in one-letter code: MAASSPPRAGELLAEARRAFREEFGAEPELAVSAPGRVNLIGEHTDYNQGLVLPMALELVTVLVGSPRADGLVSLLTTSEDADEPRRLQFPLPTAQRSLEPGTPRWANYVKGVIQHYPAAPLPGFSAVVVSSVPLGGGLSSSASLEVATYTFLQQLCPDSGSVAARAQVCQQAEHSFAGVPCGIMDQLIALLGQEGHALLIDCRSLETSLVPLSEPKLAVLITNSNVRHSLGSSEYPLRRRQCEEVARALGKESLREVQLEELEAGRELVSKEGFRRARHVVGEIRRTAQAAAALCRGDYRAFGRLMVESHHSLRDDYEVSCPELDQLVEAALSAPGVYGSRMTGGGFGGCTVTLLEASFTSQVMQHIQEQYSGTATFYLSQAADGAKVLHW.

Arg37, Glu43, His44, and Asp46 together coordinate alpha-D-galactose. Gly136, Gly138, Ser140, and Ser141 together coordinate ATP. An alpha-D-galactose-binding site is contributed by Asp186. The active-site Proton acceptor is Asp186. Ser230 carries the post-translational modification Phosphoserine. Tyr236 is an alpha-D-galactose binding site.

It belongs to the GHMP kinase family. GalK subfamily. Homodimer.

It carries out the reaction alpha-D-galactose + ATP = alpha-D-galactose 1-phosphate + ADP + H(+). It participates in carbohydrate metabolism; galactose metabolism. In terms of biological role, catalyzes the transfer of a phosphate from ATP to alpha-D-galactose and participates in the first committed step in the catabolism of galactose. This Canis lupus familiaris (Dog) protein is Galactokinase (GALK1).